Reading from the N-terminus, the 345-residue chain is MERKLMSLLPSISLSEMEPNSTLGNHNSNRSCTTENFKREFYPIVYLVIFIWGALGNGFSIYVFLKPYKKSTSVNVFMLNLAISDLLFTITLPFRVDYYLRGSNXIFGDTPCRIMSYSMYVNMYSSIYFLTVLSVVRFLATVHPFRLLHTTSIKNAWILCGVIWIFIMASSTVLLKNGSEQKDNVTLCLELNSNKVTKLKTMNYVALVVGFVLPFGTLSICYLLIIRALLKVEVPESGLRLSHRKALITVIIALIIFLLCFLPYHVLRTLHLLEWKADKCKDRLHKAVAVTLALAAANSCFNPFLYYFAGENFKDRLKSALRKGRPQKTRCGFSVCVWLKKETRV.

Residues 1–43 (MERKLMSLLPSISLSEMEPNSTLGNHNSNRSCTTENFKREFYP) lie on the Extracellular side of the membrane. Residues asparagine 20 and asparagine 29 are each glycosylated (N-linked (GlcNAc...) asparagine). Residues 44–64 (IVYLVIFIWGALGNGFSIYVF) traverse the membrane as a helical segment. The Cytoplasmic segment spans residues 65–73 (LKPYKKSTS). A helical transmembrane segment spans residues 74-94 (VNVFMLNLAISDLLFTITLPF). The Extracellular segment spans residues 95 to 124 (RVDYYLRGSNXIFGDTPCRIMSYSMYVNMY). Cysteine 112 and cysteine 188 are oxidised to a cystine. A helical transmembrane segment spans residues 125-145 (SSIYFLTVLSVVRFLATVHPF). Topologically, residues 146-154 (RLLHTTSIK) are cytoplasmic. The helical transmembrane segment at 155–175 (NAWILCGVIWIFIMASSTVLL) threads the bilayer. The Extracellular segment spans residues 176–205 (KNGSEQKDNVTLCLELNSNKVTKLKTMNYV). N-linked (GlcNAc...) asparagine glycans are attached at residues asparagine 177 and asparagine 184. Residues 206-226 (ALVVGFVLPFGTLSICYLLII) traverse the membrane as a helical segment. Over 227–246 (RALLKVEVPESGLRLSHRKA) the chain is Cytoplasmic. Residues 247 to 267 (LITVIIALIIFLLCFLPYHVL) traverse the membrane as a helical segment. At 268 to 287 (RTLHLLEWKADKCKDRLHKA) the chain is on the extracellular side. Residues 288–308 (VAVTLALAAANSCFNPFLYYF) form a helical membrane-spanning segment. Residues 309–345 (AGENFKDRLKSALRKGRPQKTRCGFSVCVWLKKETRV) lie on the Cytoplasmic side of the membrane.

This sequence belongs to the G-protein coupled receptor 1 family.

The protein resides in the cell membrane. In terms of biological role, receptor for cysteinyl leukotrienes. The response is mediated via a G-protein that activates a phosphatidylinositol-calcium second messenger system. The chain is Cysteinyl leukotriene receptor 2 (CYSLTR2) from Sus scrofa (Pig).